The chain runs to 432 residues: Glutamyl-tRNA reductase (432 aa).

Substrate-binding positions include 55 to 58 (TCNR), Ser-113, 118 to 120 (EAQ), and Gln-124. Residue Cys-56 is the Nucleophile of the active site. NADP(+) is bound at residue 193–198 (GAGEMI).

It belongs to the glutamyl-tRNA reductase family. Homodimer.

The catalysed reaction is (S)-4-amino-5-oxopentanoate + tRNA(Glu) + NADP(+) = L-glutamyl-tRNA(Glu) + NADPH + H(+). Its pathway is porphyrin-containing compound metabolism; protoporphyrin-IX biosynthesis; 5-aminolevulinate from L-glutamyl-tRNA(Glu): step 1/2. Functionally, catalyzes the NADPH-dependent reduction of glutamyl-tRNA(Glu) to glutamate 1-semialdehyde (GSA). This chain is Glutamyl-tRNA reductase, found in Paracidovorax citrulli (strain AAC00-1) (Acidovorax citrulli).